We begin with the raw amino-acid sequence, 435 residues long: Envelope glycoprotein M (435 aa).

Residues 1 to 36 are Intravirion-facing; it reads MGTQKKGPRSEKVSPYDTTTPEVEALDHQMDTLNWR. The helical transmembrane segment at 37 to 57 threads the bilayer; it reads IWIIQVMMFTLGAVMLLATLI. At 58 to 111 the chain is on the virion surface side; sequence AASSEYTGIPCFYAAVVDYELFNATLDGGVWSGNRGGYSAPVLFLEPHSVVAFT. Residues 112–132 form a helical membrane-spanning segment; sequence YYTALTAMAMAVYTLITAAII. The Intravirion portion of the chain corresponds to 133-155; it reads HRETKNQRVRQSSGVAWLVVDPT. Residues 156-176 form a helical membrane-spanning segment; it reads TLFWGLLSLWLLNAVVLLLAY. Residues 177-178 are Virion surface-facing; sequence KQ. Residues 179 to 199 form a helical membrane-spanning segment; the sequence is IGVAATLYLGHFATSVIFTTY. Topologically, residues 200–233 are intravirion; sequence FCGRGKLDETNIKAVANLRQQSVFLYRLAGPTRA. Residues 234 to 254 form a helical membrane-spanning segment; sequence VFVNLMAALMAICILFVSLML. The Virion surface portion of the chain corresponds to 255–265; it reads ELVVANHLHTG. The chain crosses the membrane as a helical span at residues 266–288; it reads LWSSVSVAMSTFSTLSVVYLIVS. At 289–294 the chain is on the intravirion side; the sequence is ELILAH. A helical transmembrane segment spans residues 295–317; it reads YIHVLIGPSLGTLVACATLGTAA. Residues 318 to 334 are Virion surface-facing; the sequence is HSYMDRLYDPISVQSPR. A helical transmembrane segment spans residues 335–355; the sequence is LIPTTRGTLACLAVFSVVMLL. Topologically, residues 356–435 are intravirion; sequence LRLMRAYVYH…LYERSNSGWE (80 aa).

The protein belongs to the herpesviridae glycoprotein M family. Interacts (via N-terminus) with gN (via N-terminus). The gM-gN heterodimer forms the gCII complex.

It localises to the virion membrane. Its subcellular location is the host Golgi apparatus. It is found in the host trans-Golgi network. The protein resides in the host endosome membrane. The protein localises to the host nucleus inner membrane. Envelope glycoprotein important for virion assembly and egress. Plays a role in the correct incorporation of gH-gL into virion membrane. Directs the glycoprotein N (gN) to the host trans-Golgi network. This chain is Envelope glycoprotein M, found in Homo sapiens (Human).